Consider the following 228-residue polypeptide: Small ribosomal subunit protein uS3 (228 aa).

A KH type-2 domain is found at 39–107 (TREYLQDKLK…PVHINIEEIR (69 aa)).

The protein belongs to the universal ribosomal protein uS3 family. In terms of assembly, part of the 30S ribosomal subunit. Forms a tight complex with proteins S10 and S14.

Its function is as follows. Binds the lower part of the 30S subunit head. Binds mRNA in the 70S ribosome, positioning it for translation. The sequence is that of Small ribosomal subunit protein uS3 from Pseudomonas putida (strain ATCC 700007 / DSM 6899 / JCM 31910 / BCRC 17059 / LMG 24140 / F1).